We begin with the raw amino-acid sequence, 66 residues long: UPF0370 protein YpfN (66 aa).

A helical transmembrane segment spans residues 4 to 24; that stretch reads LAKYWWILVIVFLVGVLLNVI. The disordered stretch occupies residues 39 to 66; sequence KPELPPHRDFNDKWDDDDDWPKKDQPKK. The segment covering 42-51 has biased composition (basic and acidic residues); it reads LPPHRDFNDK.

The protein belongs to the UPF0370 family.

Its subcellular location is the cell membrane. The protein is UPF0370 protein YpfN of Escherichia coli O139:H28 (strain E24377A / ETEC).